Consider the following 185-residue polypeptide: Elongation factor P (185 aa).

The protein belongs to the elongation factor P family.

Its subcellular location is the cytoplasm. The protein operates within protein biosynthesis; polypeptide chain elongation. In terms of biological role, involved in peptide bond synthesis. Stimulates efficient translation and peptide-bond synthesis on native or reconstituted 70S ribosomes in vitro. Probably functions indirectly by altering the affinity of the ribosome for aminoacyl-tRNA, thus increasing their reactivity as acceptors for peptidyl transferase. The chain is Elongation factor P from Salinispora arenicola (strain CNS-205).